The following is a 221-amino-acid chain: NADH-ubiquinone oxidoreductase chain 6 (221 aa).

5 helical membrane passes run 18–38, 44–64, 74–94, 107–127, and 195–215; these read FVEYILDIFSIMAFLTGIYVI, IVSVLFLILLFGGISSYLNII, IIVYIGAVSILFLFILMLINI, IPLTIFIGIIFSNFLFPMLPY, and IWLIIASFILLLAMVGSIVIT.

This sequence belongs to the complex I subunit 6 family.

The protein localises to the mitochondrion membrane. It catalyses the reaction a ubiquinone + NADH + 5 H(+)(in) = a ubiquinol + NAD(+) + 4 H(+)(out). Functionally, core subunit of the mitochondrial membrane respiratory chain NADH dehydrogenase (Complex I) that is believed to belong to the minimal assembly required for catalysis. Complex I functions in the transfer of electrons from NADH to the respiratory chain. The immediate electron acceptor for the enzyme is believed to be ubiquinone. This chain is NADH-ubiquinone oxidoreductase chain 6 (ND6), found in Podospora anserina (strain S / ATCC MYA-4624 / DSM 980 / FGSC 10383) (Pleurage anserina).